A 101-amino-acid polypeptide reads, in one-letter code: Small ribosomal subunit protein uS14 (101 aa).

The protein belongs to the universal ribosomal protein uS14 family. In terms of assembly, part of the 30S ribosomal subunit. Contacts proteins S3 and S10.

In terms of biological role, binds 16S rRNA, required for the assembly of 30S particles and may also be responsible for determining the conformation of the 16S rRNA at the A site. This is Small ribosomal subunit protein uS14 from Alcanivorax borkumensis (strain ATCC 700651 / DSM 11573 / NCIMB 13689 / SK2).